Here is a 652-residue protein sequence, read N- to C-terminus: Probable potassium transport system protein Kup (652 aa).

Over residues 1–20 (MSNDTSPGTSSVDSKSSDPS) the composition is skewed to low complexity. The interval 1 to 26 (MSNDTSPGTSSVDSKSSDPSYGVPGH) is disordered. 12 consecutive transmembrane segments (helical) span residues 36–56 (LSLG…LYAL), 76–96 (LVSL…VMFI), 125–145 (WLIV…MITP), 161–181 (PSFD…LFCI), 193–213 (FGPI…FNII), 228–248 (AIHF…SVVL), 270–290 (LGWY…QCAL), 314–334 (LIIL…TGAF), 362–382 (IYIP…IAMF), 391–411 (AYGI…GVLV), 419–439 (AWQS…FFLS), and 444–464 (IPEG…MLMT).

It belongs to the HAK/KUP transporter (TC 2.A.72) family.

The protein localises to the cell inner membrane. The catalysed reaction is K(+)(in) + H(+)(in) = K(+)(out) + H(+)(out). Transport of potassium into the cell. Likely operates as a K(+):H(+) symporter. In Zymomonas mobilis subsp. mobilis (strain ATCC 31821 / ZM4 / CP4), this protein is Probable potassium transport system protein Kup.